The chain runs to 156 residues: MSRRNISKKRFPETDAIYNSYLVSLLISRILKSGKKTIAKKIVYQAFDIIKKKTNEDPLTVFEKAIRNASPIVEVKARRVGGSTYQVPVEVTGFRATNLSLRWIIRYGDQRVGRSMAIKLANEIIDTANDIGNTIKKKEETHKMAEANKAFAHFRY.

The protein belongs to the universal ribosomal protein uS7 family. In terms of assembly, part of the 30S ribosomal subunit.

The protein localises to the plastid. The protein resides in the chloroplast. In terms of biological role, one of the primary rRNA binding proteins, it binds directly to 16S rRNA where it nucleates assembly of the head domain of the 30S subunit. The protein is Small ribosomal subunit protein uS7c (rps7) of Phaeodactylum tricornutum (strain CCAP 1055/1).